The following is a 156-amino-acid chain: Ribosomal RNA large subunit methyltransferase H (156 aa).

S-adenosyl-L-methionine contacts are provided by residues Leu73, Gly104, and 123–128; that span reads LSAMTL.

The protein belongs to the RNA methyltransferase RlmH family. Homodimer.

The protein localises to the cytoplasm. The catalysed reaction is pseudouridine(1915) in 23S rRNA + S-adenosyl-L-methionine = N(3)-methylpseudouridine(1915) in 23S rRNA + S-adenosyl-L-homocysteine + H(+). In terms of biological role, specifically methylates the pseudouridine at position 1915 (m3Psi1915) in 23S rRNA. In Laribacter hongkongensis (strain HLHK9), this protein is Ribosomal RNA large subunit methyltransferase H.